Here is a 419-residue protein sequence, read N- to C-terminus: Protein translocase subunit SecY (419 aa).

10 helical membrane passes run 19-39, 64-84, 113-133, 143-163, 167-189, 202-222, 255-275, 299-319, 359-379, and 380-400; these read IMIL…ITEV, VISI…AVQF, ILTV…LRSF, FVVA…SEVI, GIGN…FLIN, SNLY…FSTL, FGQA…FLTT, IFYF…YTLI, FVGS…AAAL, and GVHP…SIIN.

Belongs to the SecY/SEC61-alpha family. Component of the plastid Sec protein translocase complex, which is composed of at least SecY and SecE.

The protein resides in the plastid. It localises to the chloroplast thylakoid membrane. Functionally, the central subunit of the protein translocation channel SecYE. Consists of two halves formed by TMs 1-5 and 6-10. These two domains form a lateral gate at the front which open onto the bilayer between TMs 2 and 7, and are clamped together by SecE at the back. The channel is closed by both a pore ring composed of hydrophobic SecY resides and a short helix (helix 2A) on the extracellular side of the membrane which forms a plug. This Diacronema lutheri (Unicellular marine alga) protein is Protein translocase subunit SecY.